The primary structure comprises 278 residues: MSAEKSDKAKISAQIKHVPKDAQVIMSILKELNVQEYEPRVVNQLLEFTFRYVTCILDDAKVYANHARKKTIDLDDVRLATEVTLDKSFTGPLERHVLAKVADVRNSMPLPPIKPHCGLRLPPDRYCLTGVNYKLRATNQPKKMTKSAVEGRPLKTVVKPVSSANGPKRPHSVVAKQQVVTIPKPVIKFTTTTTTKTVGSSGGSGGGGGQEVKSESTGAGGDLKMEVDSDAAAVGSIAGASGSGAGSASGGGGGGGSSGVGVAVKREREEEEFEFVTN.

The segment at 193-278 (TTTKTVGSSG…EEEEFEFVTN (86 aa)) is disordered. The span at 200 to 210 (SSGGSGGGGGQ) shows a compositional bias: gly residues. Over residues 231–240 (AAAVGSIAGA) the composition is skewed to low complexity. Residues 241 to 259 (SGSGAGSASGGGGGGGSSG) are compositionally biased toward gly residues. The segment covering 269–278 (EEEEFEFVTN) has biased composition (acidic residues).

The protein belongs to the TAF9 family. In terms of assembly, belongs to the TFIID complex which is composed of TATA binding protein (Tbp) and a number of TBP-associated factors (TAFs). Taf9 and Taf6 exist as a heterotetramer. Interacts with e(y)2.

It is found in the nucleus. Functionally, TFIID is a multimeric protein complex that plays a central role in mediating promoter responses to various activators and repressors. In Drosophila melanogaster (Fruit fly), this protein is Transcription initiation factor TFIID subunit 9.